Here is a 260-residue protein sequence, read N- to C-terminus: WUSCHEL-related homeobox 2 (260 aa).

Positions 10–74 (ASSSRWNPTK…NHKARQRQKQ (65 aa)) form a DNA-binding region, homeobox; WUS-type.

It belongs to the WUS homeobox family.

It is found in the nucleus. In terms of biological role, probable transcription factor involved in embryonic patterning. Required for apical embryo development after fertilization. Its specific localization to the apical daughter cell of the zygote, while WOX8 is confined to the basal cell, suggests that the asymmetric division of the plant zygote separates determinants of apical and basal cell fates. This chain is WUSCHEL-related homeobox 2 (WOX2), found in Arabidopsis thaliana (Mouse-ear cress).